The following is a 127-amino-acid chain: Small ribosomal subunit protein uS11 (127 aa).

It belongs to the universal ribosomal protein uS11 family. In terms of assembly, part of the 30S ribosomal subunit. Interacts with proteins S7 and S18. Binds to IF-3.

Located on the platform of the 30S subunit, it bridges several disparate RNA helices of the 16S rRNA. Forms part of the Shine-Dalgarno cleft in the 70S ribosome. The chain is Small ribosomal subunit protein uS11 from Lactococcus lactis subsp. lactis (strain IL1403) (Streptococcus lactis).